Here is a 309-residue protein sequence, read N- to C-terminus: Probable MRF1 mitochondrial N(5)-glutamine methyltransferase mtq1 (309 aa).

S-adenosyl-L-methionine-binding positions include 124–128, Asp148, and Asn200; that span reads CTGSG. Residue 200–203 participates in substrate binding; it reads NPPY.

Belongs to the protein N5-glutamine methyltransferase family.

It localises to the mitochondrion. It catalyses the reaction L-glutaminyl-[peptide chain release factor] + S-adenosyl-L-methionine = N(5)-methyl-L-glutaminyl-[peptide chain release factor] + S-adenosyl-L-homocysteine + H(+). Its function is as follows. Methylates MRF1 on 'Gln-270' using S-adenosyl L-methionine as methyl donor. This is Probable MRF1 mitochondrial N(5)-glutamine methyltransferase mtq1 (mtq1) from Schizosaccharomyces pombe (strain 972 / ATCC 24843) (Fission yeast).